A 444-amino-acid chain; its full sequence is Putative zinc metalloprotease PD_0327 (444 aa).

His-22 is a Zn(2+) binding site. The active site involves Glu-23. His-26 contributes to the Zn(2+) binding site. Residues 98 to 120 form a helical membrane-spanning segment; the sequence is IAIVAAGPLANLLLCMLLLWVLF. A PDZ domain is found at 192-278; sequence TLELSKLKQP…HPGMIEIRRG (87 aa). Transmembrane regions (helical) follow at residues 371–393 and 418–440; these read VGWFIYFLSLLSLSLAIINLFPI and AMAAGQYIGLALLAGLMGLAFYN.

The protein belongs to the peptidase M50B family. Zn(2+) is required as a cofactor.

It is found in the cell inner membrane. The polypeptide is Putative zinc metalloprotease PD_0327 (Xylella fastidiosa (strain Temecula1 / ATCC 700964)).